Reading from the N-terminus, the 32-residue chain is Cytochrome b6-f complex subunit 7 (32 aa).

A helical transmembrane segment spans residues 5-25 (IFGTAAIFWVLIPAGLLGGAL).

It belongs to the PetM family. In terms of assembly, the 4 large subunits of the cytochrome b6-f complex are cytochrome b6, subunit IV (17 kDa polypeptide, PetD), cytochrome f and the Rieske protein, while the 4 small subunits are PetG, PetL, PetM and PetN. The complex functions as a dimer.

It is found in the cellular thylakoid membrane. Its function is as follows. Component of the cytochrome b6-f complex, which mediates electron transfer between photosystem II (PSII) and photosystem I (PSI), cyclic electron flow around PSI, and state transitions. The sequence is that of Cytochrome b6-f complex subunit 7 from Prochlorococcus marinus (strain SARG / CCMP1375 / SS120).